We begin with the raw amino-acid sequence, 206 residues long: MDLKVTTLAGKDAGKVEVSDEIFGLDPREDILHRVVRWQLAKRQQGTHKAKGRAEIARTGAKMYRQKGTGRARHSSARAPQFRGGGKAHGPVPHSHAHDLPKKVRALGLKHALSAKAKSANLIIVDDLAIKEAKTKALVESFAKLGVTNALMIGGAEIDAGFKRAAANIPNIDVLPIQGINVYDILRRGTLVLSKAAVEALEERFK.

The interval 63–98 is disordered; sequence MYRQKGTGRARHSSARAPQFRGGGKAHGPVPHSHAH. Residues 64-76 show a composition bias toward basic residues; sequence YRQKGTGRARHSS.

This sequence belongs to the universal ribosomal protein uL4 family. In terms of assembly, part of the 50S ribosomal subunit.

Functionally, one of the primary rRNA binding proteins, this protein initially binds near the 5'-end of the 23S rRNA. It is important during the early stages of 50S assembly. It makes multiple contacts with different domains of the 23S rRNA in the assembled 50S subunit and ribosome. In terms of biological role, forms part of the polypeptide exit tunnel. This is Large ribosomal subunit protein uL4 from Chelativorans sp. (strain BNC1).